Consider the following 332-residue polypeptide: L-lactate dehydrogenase A chain (332 aa).

At alanine 2 the chain carries N-acetylalanine. Residue lysine 5 is modified to N6-acetyllysine; alternate. N6-succinyllysine; alternate is present on lysine 5. Lysine 14 is subject to N6-acetyllysine. 29-57 contributes to the NAD(+) binding site; it reads GAVGMACAISILMKDLADELALVDVMEDK. At lysine 57 the chain carries N6-acetyllysine; alternate. Lysine 57 participates in a covalent cross-link: Glycyl lysine isopeptide (Lys-Gly) (interchain with G-Cter in SUMO2); alternate. Lysine 81 carries the N6-acetyllysine modification. Arginine 99 is an NAD(+) binding site. A substrate-binding site is contributed by arginine 106. Lysine 118 carries the N6-acetyllysine; alternate modification. Residue lysine 118 is modified to N6-succinyllysine; alternate. An N6-acetyllysine modification is found at lysine 126. Residue asparagine 138 participates in NAD(+) binding. Positions 138 and 169 each coordinate substrate. Histidine 193 functions as the Proton acceptor in the catalytic mechanism. 2 positions are modified to N6-acetyllysine: lysine 224 and lysine 232. Residue tyrosine 239 is modified to Phosphotyrosine. At lysine 243 the chain carries N6-acetyllysine. Threonine 248 is a substrate binding site. Position 309 is a phosphothreonine (threonine 309). Lysine 318 carries the post-translational modification N6-acetyllysine; alternate. At lysine 318 the chain carries N6-succinyllysine; alternate. Threonine 322 is subject to Phosphothreonine.

It belongs to the LDH/MDH superfamily. LDH family. Homotetramer. Interacts with PTEN upstream reading frame protein MP31. ISGylated.

Its subcellular location is the cytoplasm. It catalyses the reaction (S)-lactate + NAD(+) = pyruvate + NADH + H(+). Its pathway is fermentation; pyruvate fermentation to lactate; (S)-lactate from pyruvate: step 1/1. Functionally, interconverts simultaneously and stereospecifically pyruvate and lactate with concomitant interconversion of NADH and NAD(+). The protein is L-lactate dehydrogenase A chain (Ldha) of Mus musculus (Mouse).